Consider the following 506-residue polypeptide: FAD-linked oxidoreductase aurO (506 aa).

The region spanning Ile92–Met260 is the FAD-binding PCMH-type domain.

Belongs to the oxygen-dependent FAD-linked oxidoreductase family. In terms of assembly, might be part of an extracellular enzyme complex composed of GIP1, aurF, aurO and aurS. The cofactor is FAD.

It localises to the secreted. It is found in the extracellular space. Its pathway is pigment biosynthesis. In terms of biological role, FAD-linked oxidoreductase; part of the gene cluster that mediates the biosynthesis of aurofusarin, a red mycelium pigment which is acting as a mycotoxin. The first step is performed by the polyketide synthase which condenses one acetyl-CoA and 6 malonyl-CoA units to form the first intermediate, the cyclic heptaketide and yellow pigment YWA1. The C2 hydroxyl group in the pyrone ring of YWA1 is probably formed during ring closure by an aldol-type cyclization reaction. The dehydratase aurZ then acts as the first tailoring enzyme in the aurofusarin biosynthetic pathway by converting YWA1 to nor-rubrofusarin. Nor-rubrofusarin is then methylated to rubrofusarin by the O-methyltransferase aurJ. Rubrofusarin is then transported across the plasma membrane by the rubrofusarin-specific pump aurT for further enzymatic processing by the extracellular complex composed of GIP1, aurF, aurO and aurS to yield aurofusarin. This Gibberella zeae (strain ATCC MYA-4620 / CBS 123657 / FGSC 9075 / NRRL 31084 / PH-1) (Wheat head blight fungus) protein is FAD-linked oxidoreductase aurO.